Consider the following 302-residue polypeptide: Light-independent protochlorophyllide reductase iron-sulfur ATP-binding protein (302 aa).

Polar residues predominate over residues 1-10 (MSTATISPSQ). The tract at residues 1–21 (MSTATISPSQIGRGARPDGEG) is disordered. ATP is bound by residues 46 to 51 (GIGKST) and Lys-75. Ser-50 is a Mg(2+) binding site. [4Fe-4S] cluster-binding residues include Cys-131 and Cys-165. Residues 216 to 217 (NR) and 240 to 242 (PAL) contribute to the ATP site.

It belongs to the NifH/BchL/ChlL family. Homodimer. Protochlorophyllide reductase is composed of three subunits; BchL, BchN and BchB. [4Fe-4S] cluster is required as a cofactor.

The catalysed reaction is chlorophyllide a + oxidized 2[4Fe-4S]-[ferredoxin] + 2 ADP + 2 phosphate = protochlorophyllide a + reduced 2[4Fe-4S]-[ferredoxin] + 2 ATP + 2 H2O. Its pathway is porphyrin-containing compound metabolism; bacteriochlorophyll biosynthesis (light-independent). Its function is as follows. Component of the dark-operative protochlorophyllide reductase (DPOR) that uses Mg-ATP and reduced ferredoxin to reduce ring D of protochlorophyllide (Pchlide) to form chlorophyllide a (Chlide). This reaction is light-independent. The L component serves as a unique electron donor to the NB-component of the complex, and binds Mg-ATP. The polypeptide is Light-independent protochlorophyllide reductase iron-sulfur ATP-binding protein (Rubrivivax gelatinosus (strain NBRC 100245 / IL144)).